We begin with the raw amino-acid sequence, 247 residues long: Ras-like protein family member 11B (247 aa).

Residues 28–245 form a small GTPase-like region; the sequence is AGRRLVKIAV…ALSAKVRTVT (218 aa). GTP is bound by residues 39 to 46, 86 to 93, and 151 to 154; these read GASGVGKT, DTPGIQVH, and NKAD. Positions 202-228 are disordered; that stretch reads PKQQPSSTPEKRRTSLIPRPKSPNMQD.

It belongs to the small GTPase superfamily. Ras family.

It catalyses the reaction GTP + H2O = GDP + phosphate + H(+). This chain is Ras-like protein family member 11B, found in Mus musculus (Mouse).